The chain runs to 283 residues: Non-selective voltage-gated ion channel 1 (283 aa).

Positions 11 and 19 each coordinate ATP. S109 carries the post-translational modification Phosphoserine. T117 is subject to Phosphothreonine.

The protein belongs to the eukaryotic mitochondrial porin family. Homodimer. Interacts with FCJ1. Interacts with AIM5. Interacts.

The protein resides in the mitochondrion outer membrane. In terms of biological role, non-selective voltage-gated ion channel that mediates the transport of anions and cations through the mitochondrion outer membrane. The channel adopts an open conformation at low or zero membrane potential and a closed conformation at potentials above 30-40 mV. The open state has a weak anion selectivity whereas the closed state is cation-selective. Is the major permeability factor of the mitochondrial outer membrane. Its function is as follows. Catalyzes the scrambling of phospholipids across the outer mitochondrial membrane; the mechanism is unrelated to channel activity and is capable of translocating both anionic and zwitterionic phospholipids. This Saccharomyces cerevisiae (strain ATCC 204508 / S288c) (Baker's yeast) protein is Non-selective voltage-gated ion channel 1 (POR1).